We begin with the raw amino-acid sequence, 245 residues long: 14-3-3 protein theta (245 aa).

The residue at position 1 (methionine 1) is an N-acetylmethionine. Lysine 3 bears the N6-acetyllysine mark. Residue lysine 49 is modified to N6-acetyllysine; alternate. Lysine 49 is covalently cross-linked (Glycyl lysine isopeptide (Lys-Gly) (interchain with G-Cter in SUMO2); alternate). At lysine 68 the chain carries N6-acetyllysine. Tyrosine 82 is subject to 3'-nitrotyrosine. A Phosphoserine modification is found at serine 92. Tyrosine 104 is subject to 3'-nitrotyrosine. N6-acetyllysine is present on lysine 115. Position 232 is a phosphoserine; by CK1 (serine 232).

The protein belongs to the 14-3-3 family. In terms of assembly, homodimer. Interacts with CDKN1B ('Thr-198' phosphorylated form); the interaction translocates CDKN1B to the cytoplasm. Interacts with SSH1. Interacts with GAB2. Interacts with RGS7 (phosphorylated form). Interacts with CDK16. Interacts with the 'Ser-241' phosphorylated form of PDPK1. Interacts with the 'Thr-369' phosphorylated form of DAPK2. Interacts with PI4KB, TBC1D22A and TBC1D22B. Interacts with SLITRK1. Interacts with RIPOR2. Interacts with INAVA; the interaction increases upon PRR (pattern recognition receptor) stimulation and is required for cellular signaling pathway activation and cytokine secretion. Interacts with MARK2, MARK3 and MARK4. Interacts with MEFV.

The protein localises to the cytoplasm. Functionally, adapter protein implicated in the regulation of a large spectrum of both general and specialized signaling pathways. Binds to a large number of partners, usually by recognition of a phosphoserine or phosphothreonine motif. Binding generally results in the modulation of the activity of the binding partner. Negatively regulates the kinase activity of PDPK1. The polypeptide is 14-3-3 protein theta (Ywhaq) (Mus musculus (Mouse)).